The chain runs to 799 residues: 1,4-alpha-glucan-branching enzyme 2, chloroplastic/amyloplastic (799 aa).

The N-terminal 57 residues, 1 to 57 (MAFRVSGAVLGGAVRAPRLTGGGEGSLVFRHTGLFLTRGARVGCSGTHGAMRAAAAA), are a transit peptide targeting the chloroplast. Residues W196 and K232 each coordinate (1,4-alpha-D-glucosyl)n. D447 functions as the Nucleophile in the catalytic mechanism. The active-site Proton donor is the E502.

It belongs to the glycosyl hydrolase 13 family. GlgB subfamily. In terms of assembly, monomer.

The protein resides in the plastid. Its subcellular location is the chloroplast. It is found in the amyloplast. It catalyses the reaction Transfers a segment of a (1-&gt;4)-alpha-D-glucan chain to a primary hydroxy group in a similar glucan chain.. It participates in glycan biosynthesis; starch biosynthesis. Catalyzes the formation of the alpha-1,6-glucosidic linkages in starch by scission of a 1,4-alpha-linked oligosaccharide from growing alpha-1,4-glucan chains and the subsequent attachment of the oligosaccharide to the alpha-1,6 position. The sequence is that of 1,4-alpha-glucan-branching enzyme 2, chloroplastic/amyloplastic (SBE1) from Zea mays (Maize).